A 391-amino-acid chain; its full sequence is Methionine import ATP-binding protein MetN 2 (391 aa).

In terms of domain architecture, ABC transporter spans V44 to L280. G77 to S84 is an ATP binding site.

It belongs to the ABC transporter superfamily. Methionine importer (TC 3.A.1.24) family. In terms of assembly, the complex is composed of two ATP-binding proteins (MetN), two transmembrane proteins (MetI) and a solute-binding protein (MetQ).

Its subcellular location is the cell inner membrane. It carries out the reaction L-methionine(out) + ATP + H2O = L-methionine(in) + ADP + phosphate + H(+). The enzyme catalyses D-methionine(out) + ATP + H2O = D-methionine(in) + ADP + phosphate + H(+). Its function is as follows. Part of the ABC transporter complex MetNIQ involved in methionine import. Responsible for energy coupling to the transport system. The chain is Methionine import ATP-binding protein MetN 2 from Burkholderia ambifaria (strain ATCC BAA-244 / DSM 16087 / CCUG 44356 / LMG 19182 / AMMD) (Burkholderia cepacia (strain AMMD)).